A 56-amino-acid chain; its full sequence is Large ribosomal subunit protein bL32 (56 aa).

The span at Met1–Arg16 shows a compositional bias: basic residues. Residues Met1–Ser33 form a disordered region. Residues Ala21–Ser33 show a composition bias toward polar residues.

This sequence belongs to the bacterial ribosomal protein bL32 family.

This is Large ribosomal subunit protein bL32 from Aliivibrio fischeri (strain ATCC 700601 / ES114) (Vibrio fischeri).